A 124-amino-acid chain; its full sequence is Small ribosomal subunit protein bS6 (124 aa).

Belongs to the bacterial ribosomal protein bS6 family.

In terms of biological role, binds together with bS18 to 16S ribosomal RNA. The sequence is that of Small ribosomal subunit protein bS6 from Campylobacter lari (strain RM2100 / D67 / ATCC BAA-1060).